A 180-amino-acid chain; its full sequence is Ribosome maturation factor RimM (180 aa).

One can recognise a PRC barrel domain in the interval 104-177; sequence EGEFHLLDLV…WLLLTPPPGL (74 aa).

The protein belongs to the RimM family. As to quaternary structure, binds ribosomal protein uS19.

The protein localises to the cytoplasm. An accessory protein needed during the final step in the assembly of 30S ribosomal subunit, possibly for assembly of the head region. Essential for efficient processing of 16S rRNA. May be needed both before and after RbfA during the maturation of 16S rRNA. It has affinity for free ribosomal 30S subunits but not for 70S ribosomes. In Synechococcus sp. (strain CC9902), this protein is Ribosome maturation factor RimM.